Here is a 366-residue protein sequence, read N- to C-terminus: uncharacterized protein (366 aa).

The next 6 helical transmembrane spans lie at Phe30–Ile50, Ile66–Ile86, Ile136–Ala156, Ile162–Leu182, Ile198–Ile218, and Tyr225–Val245.

The protein localises to the cell membrane. This is an uncharacterized protein from Methanocaldococcus jannaschii (strain ATCC 43067 / DSM 2661 / JAL-1 / JCM 10045 / NBRC 100440) (Methanococcus jannaschii).